The following is a 338-amino-acid chain: Phosphate acyltransferase (338 aa).

Belongs to the PlsX family. Homodimer. Probably interacts with PlsY.

The protein resides in the cytoplasm. It carries out the reaction a fatty acyl-[ACP] + phosphate = an acyl phosphate + holo-[ACP]. It participates in lipid metabolism; phospholipid metabolism. Functionally, catalyzes the reversible formation of acyl-phosphate (acyl-PO(4)) from acyl-[acyl-carrier-protein] (acyl-ACP). This enzyme utilizes acyl-ACP as fatty acyl donor, but not acyl-CoA. The chain is Phosphate acyltransferase from Salinibacter ruber (strain DSM 13855 / M31).